The following is a 91-amino-acid chain: Small ribosomal subunit protein uS19 (91 aa).

It belongs to the universal ribosomal protein uS19 family.

In terms of biological role, protein S19 forms a complex with S13 that binds strongly to the 16S ribosomal RNA. The sequence is that of Small ribosomal subunit protein uS19 from Lachnospira eligens (strain ATCC 27750 / DSM 3376 / VPI C15-48 / C15-B4) (Eubacterium eligens).